Reading from the N-terminus, the 336-residue chain is E3 ubiquitin-protein ligase RING2 (336 aa).

The interaction with HIP2 stretch occupies residues 2–179 (TQTVQTNGVQ…AEDNGDSSHC (178 aa)). An RING-type zinc finger spans residues 51-91 (CPICLDMLKNTMTTKECLHRFCADCIITALRSGNKECPTCR). Residues 93 to 98 (KLVSKR) form an interaction with nucleosomes via an acidic patch on histone H2A and histone H2B region. Positions 158–218 (RGKKHQIENG…NATENGGGDI (61 aa)) are disordered. The segment covering 176-190 (SSHCSNASVHSNQEA) has biased composition (polar residues).

Component of chromatin-associated Polycomb (PcG) complexes. Component of a PRC1-like complex. Component of some MLL1/MLL complex.

The protein localises to the nucleus. It localises to the cytoplasm. The protein resides in the chromosome. It catalyses the reaction S-ubiquitinyl-[E2 ubiquitin-conjugating enzyme]-L-cysteine + [acceptor protein]-L-lysine = [E2 ubiquitin-conjugating enzyme]-L-cysteine + N(6)-ubiquitinyl-[acceptor protein]-L-lysine.. It participates in protein modification; protein ubiquitination. E3 ubiquitin-protein ligase that mediates monoubiquitination of 'Lys-119' of histone H2A (H2AK119Ub), thereby playing a central role in histone code and gene regulation. H2AK119Ub gives a specific tag for epigenetic transcriptional repression. Essential component of a Polycomb group (PcG) multiprotein PRC1-like complex, a complex class required to maintain the transcriptionally repressive state of many genes, including Hox genes, throughout development. PcG PRC1 complex acts via chromatin remodeling and modification of histones, rendering chromatin heritably changed in its expressibility. In Danio rerio (Zebrafish), this protein is E3 ubiquitin-protein ligase RING2 (rnf2).